Here is a 141-residue protein sequence, read N- to C-terminus: Large ribosomal subunit protein uL11 (141 aa).

This sequence belongs to the universal ribosomal protein uL11 family. In terms of assembly, part of the ribosomal stalk of the 50S ribosomal subunit. Interacts with L10 and the large rRNA to form the base of the stalk. L10 forms an elongated spine to which L12 dimers bind in a sequential fashion forming a multimeric L10(L12)X complex.

Forms part of the ribosomal stalk which helps the ribosome interact with GTP-bound translation factors. The sequence is that of Large ribosomal subunit protein uL11 from Acidianus ambivalens (Desulfurolobus ambivalens).